The primary structure comprises 59 residues: MILYSHLSTLIDIDLSNNIFLAKLPEAYAIFDPLVDVMPVIPVFFLLLAFVWQASVSFR.

The propeptide occupies 1-22; the sequence is MILYSHLSTLIDIDLSNNIFLA. A helical transmembrane segment spans residues 30 to 50; the sequence is IFDPLVDVMPVIPVFFLLLAF.

Belongs to the PsbK family. As to quaternary structure, PSII is composed of 1 copy each of membrane proteins PsbA, PsbB, PsbC, PsbD, PsbE, PsbF, PsbH, PsbI, PsbJ, PsbK, PsbL, PsbM, PsbT, PsbX, PsbY, PsbZ, Psb30/Ycf12, at least 3 peripheral proteins of the oxygen-evolving complex and a large number of cofactors. It forms dimeric complexes.

It localises to the plastid. The protein localises to the chloroplast thylakoid membrane. One of the components of the core complex of photosystem II (PSII). PSII is a light-driven water:plastoquinone oxidoreductase that uses light energy to abstract electrons from H(2)O, generating O(2) and a proton gradient subsequently used for ATP formation. It consists of a core antenna complex that captures photons, and an electron transfer chain that converts photonic excitation into a charge separation. In Chara vulgaris (Common stonewort), this protein is Photosystem II reaction center protein K.